Consider the following 184-residue polypeptide: MSDYLKASEEKMQKSLSVLKNELAAIRAGRANPALLDRIMVDYYGTPTPLNRLATITAPEPRVLVVQPWDVSKISDIEKAIQKSDLGINPVSDGKVLRLVFPELTEERRKELVKLVHKKAEEAKVAVRQIRRDANDAVKKMEKNGEISEDERKKREEEIQKLTDKYIKEIDKVVEAKEKEIMEI.

The protein belongs to the RRF family.

It is found in the cytoplasm. Its function is as follows. Responsible for the release of ribosomes from messenger RNA at the termination of protein biosynthesis. May increase the efficiency of translation by recycling ribosomes from one round of translation to another. The protein is Ribosome-recycling factor of Thermoanaerobacter pseudethanolicus (strain ATCC 33223 / 39E) (Clostridium thermohydrosulfuricum).